The chain runs to 249 residues: MTRYKATISYDGYAFAGFQRQPHARSVQEEIEKTLTRLNKGQTITVHGAGRTDSGVHALGQVIHFDLPYQMDEEKLRFALDTQSPEDIDVISIELVAADFHCRYAKHSKTYEFIVDRGRPKNPMRRHYATHFPYPLDVERMQIAIKKLEGTHDFTGFTASGTSVEDKVRTITEASLIVDETGQFLTFTFSGNGFLYKQIRNMVGTLLKIGNNRMPVEQIDLILEKKDRQLAGPTAAPNGLYLKEIRYEE.

The active-site Nucleophile is aspartate 53. Substrate is bound at residue tyrosine 111.

The protein belongs to the tRNA pseudouridine synthase TruA family. As to quaternary structure, homodimer.

It catalyses the reaction uridine(38/39/40) in tRNA = pseudouridine(38/39/40) in tRNA. Functionally, formation of pseudouridine at positions 38, 39 and 40 in the anticodon stem and loop of transfer RNAs. This is tRNA pseudouridine synthase A from Streptococcus pneumoniae (strain Taiwan19F-14).